A 1507-amino-acid chain; its full sequence is MQINIRNEIARELNVPTTELDDSLSFTALGGHSLSALRLVSICKRIGLSLAVGELLHDIPIKDIISRSTGMYDTAGSLPILENTDPSHPDVSFNAIITPSPSPSGPSTGCPTPDTLDTTDSQDADKISIPEMQLSLIQSTLANPGNNILAYHYMCSLADLPATRMAWQQVLEAESIFRTEFRIEHEGGYLVDTGFTPYRWRDTQVPNWEALHAERDKRPSFDNVAFEFQVITVAGDNSVACILWHVHHSFIDGFSMQLVMRKVSRVVAGHPVEAGPSFATVAWERDQIIKEREADARRYWKSQKRVLEAAASEIRMPRCDFAPRSIEFWNKVATFVIDVAQSDLLGYAARHHVTVPSVYYAAWALVLSIICDSNLVLLGVVMSGRSLPVPGILDVIGSLVNTLPMGVEVELGMDTVGFINRVFRQLVQLSSFDWSPPEHGYRRQFASVLAMQFDVGGHTGTTNEPSSRMNSEIPISITVESDQVIHLQFAPEYQETQVQLMGTLFTRAISCLAAAAENPEACAARLGAQSMSYQELDRWSDCVAVHLSMYIDKGAVVCVHASPCMHWLVAIYGILKAGGVYCPLNSKLDPELRNNMFQSSGAAIYLTPSASETKYRPRASRYVWAVEDLLQRQDDNNQDEFDHIPRAEGNAYLCFTSGSTGKPKGVLCTHRGLVAFQRDLEVRLHAQPGRRIAQTMSVSFDGSIHEIFSALSYGATLVLPTPEDPFSHLYDVDSCIFTPSLAATLDPSDYPNLCYVYLVGEQVTQDINDRWAASVALYNMYGPTEATCGASIKCLLPGRKVTVGRPNPTTRIYILDRNGRLAPPGVMGQIYLAGVQVSNGYIGQSDLTNERFFPDSICCGLGERMYATGDIGYWDGDGDLICLGRNDRQIKLRGFRLDLDDLEVRISKLPGVTRAAVSRRGDDLVALVQPATACAADCRKHMAAVLPTHAIPRYIIPVERFPMTPIGKLDYRAIAQTADVRYSATPSNEMSPTEQRVAAIWADILNMDRAQISRDSNFLAAGGHSLLQLRLAGRLNRAFNCSVPITDLVKAATLRDLSQRIDKLQEQACWKAQRLPPKMDKRAISRMEREWISKYEGNTSNTSFTVSFACRLDSAVDLARLKQSWDSVMEAHQVLRSRYCACAERYERVFSDHAPVAQRIAECRVLEEINRPFDLANDDLVRVVISPDTLLVTISHIICDLTTMQLLLSDVERVYDGAEPLGHRPMYMAADAWQRVAADADLAFWTSYLQDCPHSKAKRESYAGTSRVGIVPRETVLALEDFMRSSQFSHHQLALAAVALALKPNHDRIDSVIGGPFLNRWSEADMNTIGLFLEPLPFRIQFDPKAVPNADAHAFLQSVKCSSQAAISHAVPWQELVCHLGVTPEFPNHPLFETMVTFHTKGGGLSLQIDGIEPLYTWSEGAKFGLMCEFTTLSNGDILLRLEYDQGIYAPRDISIIENRIMTALRLLIKNVPWLDLIGELHEVDGATVCVTPGHKGSLFLSPLKRT.

Residues 1–72 enclose the Carrier 1 domain; it reads MQINIRNEIA…DIISRSTGMY (72 aa). The residue at position 33 (Ser-33) is an O-(pantetheine 4'-phosphoryl)serine. The interval 98-119 is disordered; sequence TPSPSPSGPSTGCPTPDTLDTT. Positions 105 to 115 are enriched in low complexity; the sequence is GPSTGCPTPDT. The interval 163–429 is condensation 1; that stretch reads TRMAWQQVLE…NRVFRQLVQL (267 aa). The adenylation stretch occupies residues 514-893; the sequence is AAAENPEACA…GRNDRQIKLR (380 aa). Residues 988–1065 enclose the Carrier 2 domain; it reads NEMSPTEQRV…DLSQRIDKLQ (78 aa). Ser-1025 is subject to O-(pantetheine 4'-phosphoryl)serine. Residues 1099-1471 form a condensation 2 region; it reads TSNTSFTVSF…MTALRLLIKN (373 aa).

This sequence belongs to the NRP synthetase family.

Its pathway is mycotoxin biosynthesis. Its function is as follows. Nonribosomal peptide synthetase; part of the gene cluster that mediates the biosynthesis of acetylaranotin, a member of the epipolythiodioxopiperazine (ETP) class of toxins characterized by a disulfide-bridged cyclic dipeptide. The first step of acetylaranotin biosynthesis is performed by the NRPS ataP which produces diketopiperazine cyclo-L-Phe-L-Phe via the condensation of 2 phenylalanines (L-Phe). The ataC domain of ataTC then catalyzes the formation of bishydroxylation of cyclo-L-Phe-L-Phe. The glutathione S-transferase domain ataG in ataIMG further catalyzes the conjugation of two glutathiones to the bishydroxylated intermediate. Next, the dipeptidase ataJ removes the Glu residues. The following step is performed by the carbon sulfur lyase domain ataI of ataIMG which may convert the bis-cysteinyl adduct to yield an epidithiol intermediate. The ataT domain from ataTC then catalyzes the oxidation of the free dithiols, followed by a cyclization step catalyzed by the cytochrome P450 ataF. AtaF probably acts as an epoxidase to promote a dual epoxidation formation at C8 and C9 along with C8' and C9', followed by the spontaneous nucleophilic attack of the amide nitrogens N10 and N10' to yield an intermediate with the pyrrolidine partial structure. The final steps of acetylaranotin biosynthesis involve the acetylation and ring rearrangement of an epitetrathiodiketopiperazine intermediate to produce acetylaranotin. AtaH probably catalyzes the acetylation of epitetrathiodiketopiperazine to produce a diacetate and ataY is responsible for the formation of the dihydrooxepin moiety that converts the diacetate intermediate to acetylaranotin via acetylapoaranotin. Both enzymes could function independently in the absence of the other. The acetylaranotin bis-thiomethyltransferase ataS located outside of acetylaranotin gene cluster is the main thiomethyltransferase responsible for converting acetylaranotin and its related intermediates to their methylated forms. The sequence is that of Nonribosomal peptide synthetase ataP from Aspergillus terreus (strain NIH 2624 / FGSC A1156).